We begin with the raw amino-acid sequence, 500 residues long: Neuronal pentraxin receptor (500 aa).

Residues 1–2 (MK) lie on the Cytoplasmic side of the membrane. A helical; Signal-anchor for type II membrane protein membrane pass occupies residues 3-23 (FLAVLLAAGMLAFLGAVICII). The Extracellular segment spans residues 24–500 (ASVPLAASPA…FDVCKGRAKA (477 aa)). Asparagine 42 carries N-linked (GlcNAc...) asparagine glycosylation. The span at 42–63 (NASVASGAAASPGPQRSLSALH) shows a compositional bias: low complexity. 2 disordered regions span residues 42 to 81 (NASV…PAAS) and 162 to 183 (ESGL…ADGP). A glycan (N-linked (GlcNAc...) asparagine) is linked at asparagine 216. The 203-residue stretch at 292–494 (DAFKISIPIR…GATKAAFDVC (203 aa)) folds into the Pentraxin (PTX) domain. A disulfide bridge links cysteine 322 with cysteine 383. Residues asparagine 347, glutamate 425, glutamine 426, aspartate 427, and glutamine 437 each contribute to the Ca(2+) site. Residue asparagine 463 is glycosylated (N-linked (GlcNAc...) asparagine).

As to quaternary structure, heteropentamer with NPTX1 and/or NPTX2. Also binds taipoxin-associated calcium-binding protein 49 (TCBP49/RCN2). Interacts with KLHL2. Requires Ca(2+) as cofactor. In terms of processing, ubiquitinated by a cullin-RING-based BCR (BTB-CUL3-RBX1) E3 ubiquitin-protein ligase complex containing KLHL2.

The protein localises to the membrane. Its function is as follows. May be involved in mediating uptake of synaptic material during synapse remodeling or in mediating the synaptic clustering of AMPA glutamate receptors at a subset of excitatory synapses. This is Neuronal pentraxin receptor (NPTXR) from Homo sapiens (Human).